We begin with the raw amino-acid sequence, 221 residues long: Ribose-5-phosphate isomerase A (221 aa).

Substrate is bound by residues 26 to 29 (TGST), 81 to 84 (DGAD), and 94 to 97 (KGGG). Catalysis depends on glutamate 103, which acts as the Proton acceptor. Lysine 121 contacts substrate.

It belongs to the ribose 5-phosphate isomerase family. As to quaternary structure, homodimer.

It carries out the reaction aldehydo-D-ribose 5-phosphate = D-ribulose 5-phosphate. It functions in the pathway carbohydrate degradation; pentose phosphate pathway; D-ribose 5-phosphate from D-ribulose 5-phosphate (non-oxidative stage): step 1/1. Its function is as follows. Catalyzes the reversible conversion of ribose-5-phosphate to ribulose 5-phosphate. The protein is Ribose-5-phosphate isomerase A of Bacillus mycoides (strain KBAB4) (Bacillus weihenstephanensis).